A 449-amino-acid chain; its full sequence is Heterogeneous nuclear ribonucleoprotein H (449 aa).

At M1 the chain carries N-acetylmethionine. Residue M2 is modified to N-acetylmethionine; in Heterogeneous nuclear ribonucleoprotein H, N-terminally processed. An RRM 1 domain is found at 11–90 (FVVKVRGLPW…RYVEVFKSNN (80 aa)). Phosphoserine is present on S23. A Glycyl lysine isopeptide (Lys-Gly) (interchain with G-Cter in SUMO2) cross-link involves residue K35. S54 and S63 each carry phosphoserine. Residues K87 and K98 each participate in a glycyl lysine isopeptide (Lys-Gly) (interchain with G-Cter in SUMO2) cross-link. Positions 111–188 (GFVRLRGLPF…RYIEIFKSSR (78 aa)) constitute an RRM 2 domain. Residue R233 is modified to Dimethylated arginine; alternate. R233 carries the post-translational modification Omega-N-methylarginine; alternate. The 1-1 repeat unit spans residues 234-249 (GAYGGGYGGYDDYNGY). Positions 234-433 (GAYGGGYGGY…YGGQSSMSGY (200 aa)) are 2 X 16 AA Gly-rich approximate repeats. Y246 bears the Phosphotyrosine mark. The 76-residue stretch at 289 to 364 (HCVHMRGLPY…RYVELFLNST (76 aa)) folds into the RRM 3 domain. S310 bears the Phosphoserine mark. A run of 3 repeats spans residues 354–372 (HRYVELFLNSTAGASGGAY), 374–392 (HRYVELFLNSTAGASGGAY), and 418–433 (GGYGGGYGGQSSMSGY). Positions 354–392 (HRYVELFLNSTAGASGGAYEHRYVELFLNSTAGASGGAY) are 2 X 19 AA perfect repeats.

As to quaternary structure, part of a ternary complex containing FUBP2, PTBP1, PTBP2 and HNRNPH1. Identified in the spliceosome C complex. Interacts with IGF2BP1. Interacts with CUGBP1; the interaction is RNA-dependent. Interacts with MBNL1; the interaction in RNA-independent.

It is found in the nucleus. The protein resides in the nucleoplasm. Functionally, this protein is a component of the heterogeneous nuclear ribonucleoprotein (hnRNP) complexes which provide the substrate for the processing events that pre-mRNAs undergo before becoming functional, translatable mRNAs in the cytoplasm. Mediates pre-mRNA alternative splicing regulation. Inhibits, together with CUGBP1, insulin receptor (IR) pre-mRNA exon 11 inclusion in myoblast. Binds to the IR RNA. Binds poly(RG). In Mus musculus (Mouse), this protein is Heterogeneous nuclear ribonucleoprotein H (Hnrnph1).